Here is a 163-residue protein sequence, read N- to C-terminus: Succinate dehydrogenase assembly factor 2-B, mitochondrial (163 aa).

The transit peptide at 1 to 23 (MFRQLRLTMDISGWIFMPWRRSL) directs the protein to the mitochondrion.

Belongs to the SDHAF2 family. As to quaternary structure, interacts with the flavoprotein subunit within the SDH catalytic dimer.

It is found in the mitochondrion matrix. Its function is as follows. Plays an essential role in the assembly of succinate dehydrogenase (SDH), an enzyme complex (also referred to as respiratory complex II) that is a component of both the tricarboxylic acid (TCA) cycle and the mitochondrial electron transport chain, and which couples the oxidation of succinate to fumarate with the reduction of ubiquinone (coenzyme Q) to ubiquinol. Required for flavinylation (covalent attachment of FAD) of the flavoprotein subunit of the SDH catalytic dimer. In Drosophila ananassae (Fruit fly), this protein is Succinate dehydrogenase assembly factor 2-B, mitochondrial.